Consider the following 60-residue polypeptide: Short neurotoxin 1 (60 aa).

4 disulfide bridges follow: cysteine 3–cysteine 22, cysteine 17–cysteine 39, cysteine 41–cysteine 52, and cysteine 53–cysteine 58.

The protein belongs to the three-finger toxin family. Short-chain subfamily. Type I alpha-neurotoxin sub-subfamily. Expressed by the venom gland.

The protein resides in the secreted. Functionally, binds to muscle nicotinic acetylcholine receptor (nAChR) and inhibit acetylcholine from binding to the receptor, thereby impairing neuromuscular transmission. The polypeptide is Short neurotoxin 1 (Dendroaspis jamesoni kaimosae (Eastern Jameson's mamba)).